A 375-amino-acid polypeptide reads, in one-letter code: 23S rRNA (uracil(747)-C(5))-methyltransferase RlmC (375 aa).

The [4Fe-4S] cluster site is built by cysteine 3, cysteine 11, cysteine 14, and cysteine 87. Glutamine 212, phenylalanine 241, glutamate 262, and asparagine 307 together coordinate S-adenosyl-L-methionine. Residue cysteine 334 is the Nucleophile of the active site.

Belongs to the class I-like SAM-binding methyltransferase superfamily. RNA M5U methyltransferase family. RlmC subfamily.

It catalyses the reaction uridine(747) in 23S rRNA + S-adenosyl-L-methionine = 5-methyluridine(747) in 23S rRNA + S-adenosyl-L-homocysteine + H(+). Its function is as follows. Catalyzes the formation of 5-methyl-uridine at position 747 (m5U747) in 23S rRNA. This chain is 23S rRNA (uracil(747)-C(5))-methyltransferase RlmC, found in Escherichia coli O7:K1 (strain IAI39 / ExPEC).